The chain runs to 333 residues: DNA-directed RNA polymerase subunit alpha (333 aa).

Residues 1-233 form an alpha N-terminal domain (alpha-NTD) region; that stretch reads MVREKVRVST…DLFIPFLHAE (233 aa). Positions 266 to 333 are alpha C-terminal domain (alpha-CTD); sequence KKEIAFKSIF…DILEIEKHFP (68 aa).

Belongs to the RNA polymerase alpha chain family. In terms of assembly, in plastids the minimal PEP RNA polymerase catalytic core is composed of four subunits: alpha, beta, beta', and beta''. When a (nuclear-encoded) sigma factor is associated with the core the holoenzyme is formed, which can initiate transcription.

The protein resides in the plastid. It localises to the chloroplast. It carries out the reaction RNA(n) + a ribonucleoside 5'-triphosphate = RNA(n+1) + diphosphate. Functionally, DNA-dependent RNA polymerase catalyzes the transcription of DNA into RNA using the four ribonucleoside triphosphates as substrates. The protein is DNA-directed RNA polymerase subunit alpha of Lotus japonicus (Lotus corniculatus var. japonicus).